The following is a 159-amino-acid chain: Probable RNA-binding protein EIF1AD (159 aa).

Residues 18–93 (MMEDDYALPT…VKAEICKILT (76 aa)) enclose the S1-like domain. The segment at 109 to 159 (KFTKKPVQEEATSQNKDDSDFEDDLLPNTNRPVNRDSSDEEEDEETSSEED) is disordered. Acidic residues predominate over residues 146–159 (SDEEEDEETSSEED).

This sequence belongs to the EIF1AD family.

The chain is Probable RNA-binding protein EIF1AD from Drosophila melanogaster (Fruit fly).